A 623-amino-acid polypeptide reads, in one-letter code: Phosphoglucomutase, chloroplastic (623 aa).

The N-terminal 63 residues, 1-63 (MTSTYTRFDT…SSSSSSVVAG (63 aa)), are a transit peptide targeting the chloroplast. Residues Arg88 and Ser181 each coordinate alpha-D-glucose 1,6-bisphosphate. Catalysis depends on Ser181, which acts as the Phosphoserine intermediate. Positions 181, 346, 348, and 350 each coordinate Mg(2+). Position 181 is a phosphoserine (Ser181). The alpha-D-glucose 1,6-bisphosphate site is built by Asp350, Arg351, Thr414, Glu433, Ser435, and Lys446.

The protein belongs to the phosphohexose mutase family. In terms of assembly, monomer. Mg(2+) is required as a cofactor. Expressed in flowers, siliques and germinating seeds.

The protein resides in the plastid. The protein localises to the chloroplast. It catalyses the reaction alpha-D-glucose 1-phosphate = alpha-D-glucose 6-phosphate. The enzyme catalyses O-phospho-L-seryl-[protein] + alpha-D-glucose 1-phosphate = alpha-D-glucose 1,6-bisphosphate + L-seryl-[protein]. The catalysed reaction is alpha-D-glucose 1,6-bisphosphate + L-seryl-[protein] = O-phospho-L-seryl-[protein] + alpha-D-glucose 6-phosphate. Its activity is regulated as follows. Inhibited by the Calvin cycle intermediates fructose-1,6-bisphosphate and ribulose-1,5-bisphosphate. In terms of biological role, catalyzes the reversible isomerization of alpha-D-glucose 1-phosphate to alpha-D-glucose 6-phosphate. The mechanism proceeds via the intermediate compound alpha-D-glucose 1,6-bisphosphate. This enzyme participates in both the breakdown and synthesis of glucose. Factor that affects seed oil content. Accumulated starch in young embryos may play an important role in providing carbon resources for seed storage lipid biosynthesis in oilseed plants. Promotes gravitropic responses, negative in shoots but positive in roots, by facilitating starch granules (statoliths) formation in hypocotyls and roots columella. This chain is Phosphoglucomutase, chloroplastic, found in Arabidopsis thaliana (Mouse-ear cress).